Reading from the N-terminus, the 169-residue chain is ATP synthase subunit b (169 aa).

The chain crosses the membrane as a helical span at residues 3–23 (IKILLLVLPFFAFASEHGGVN).

This sequence belongs to the ATPase B chain family. F-type ATPases have 2 components, F(1) - the catalytic core - and F(0) - the membrane proton channel. F(1) has five subunits: alpha(3), beta(3), gamma(1), delta(1), epsilon(1). F(0) has three main subunits: a(1), b(2) and c(10-14). The alpha and beta chains form an alternating ring which encloses part of the gamma chain. F(1) is attached to F(0) by a central stalk formed by the gamma and epsilon chains, while a peripheral stalk is formed by the delta and b chains.

It is found in the cell inner membrane. Functionally, f(1)F(0) ATP synthase produces ATP from ADP in the presence of a proton or sodium gradient. F-type ATPases consist of two structural domains, F(1) containing the extramembraneous catalytic core and F(0) containing the membrane proton channel, linked together by a central stalk and a peripheral stalk. During catalysis, ATP synthesis in the catalytic domain of F(1) is coupled via a rotary mechanism of the central stalk subunits to proton translocation. Its function is as follows. Component of the F(0) channel, it forms part of the peripheral stalk, linking F(1) to F(0). The polypeptide is ATP synthase subunit b (Campylobacter curvus (strain 525.92)).